The chain runs to 238 residues: tRNA1(Val) (adenine(37)-N6)-methyltransferase (238 aa).

This sequence belongs to the methyltransferase superfamily. tRNA (adenine-N(6)-)-methyltransferase family.

It is found in the cytoplasm. The enzyme catalyses adenosine(37) in tRNA1(Val) + S-adenosyl-L-methionine = N(6)-methyladenosine(37) in tRNA1(Val) + S-adenosyl-L-homocysteine + H(+). Its function is as follows. Specifically methylates the adenine in position 37 of tRNA(1)(Val) (anticodon cmo5UAC). The protein is tRNA1(Val) (adenine(37)-N6)-methyltransferase of Shewanella baltica (strain OS223).